Here is a 563-residue protein sequence, read N- to C-terminus: Kdo(2)-lipid A phosphoethanolamine 7''-transferase (563 aa).

Residues 1-9 (MRYIKSITQ) are Cytoplasmic-facing. The helical transmembrane segment at 10–30 (QKLSFLLAIYIGLFMNGAVFY) threads the bilayer. Topologically, residues 31–48 (RRFGSYAHDFTVWKGISA) are periplasmic. A helical membrane pass occupies residues 49–69 (VVELAATVLVTFFLLRLLSLF). At 70–79 (GRRSWRILAS) the chain is on the cytoplasmic side. Residues 80 to 100 (LVVLFSAGASYYMTFLNVVIG) traverse the membrane as a helical segment. The Periplasmic portion of the chain corresponds to 101–117 (YGIIASVMTTDIDLSKE). A helical membrane pass occupies residues 118-138 (VVGLNFILWLIAVSALPLILI). At 139–159 (WNNRCRYTLLRQLRTPGQRIR) the chain is on the cytoplasmic side. A helical membrane pass occupies residues 160-180 (SLAVVVLAGIMVWAPIRLLDI). The Periplasmic portion of the chain corresponds to 181-563 (QQKKVERATG…IPQAKEAAAN (383 aa)).

Belongs to the phosphoethanolamine transferase family. EptB subfamily. Ca(2+) is required as a cofactor.

It is found in the cell inner membrane. The catalysed reaction is alpha-Kdo-(2-&gt;4)-alpha-Kdo-(2-&gt;6)-lipid A (E. coli) + a 1,2-diacyl-sn-glycero-3-phosphoethanolamine = 7-O-[2-aminoethoxy(hydroxy)phosphoryl]-alpha-Kdo-(2-&gt;4)-alpha-Kdo-(2-&gt;6)-lipid A + a 1,2-diacyl-sn-glycerol. The enzyme catalyses alpha-Kdo-(2-&gt;4)-alpha-Kdo-(2-&gt;6)-lipid IVA (E. coli) + a 1,2-diacyl-sn-glycero-3-phosphoethanolamine = 7-O-[2-aminoethoxy(hydroxy)phosphoryl]-alpha-Kdo-(2-&gt;4)-alpha-Kdo-(2-&gt;6)-lipid IVA (E. coli) + a 1,2-diacyl-sn-glycerol. With respect to regulation, inhibited by calcium concentrations higher than 1 mM. Its function is as follows. Catalyzes the addition of a phosphoethanolamine (pEtN) moiety to the outer 3-deoxy-D-manno-octulosonic acid (Kdo) residue of a Kdo(2)-lipid A. Phosphatidylethanolamines with one unsaturated acyl group function as pEtN donors and the reaction releases diacylglycerol. The sequence is that of Kdo(2)-lipid A phosphoethanolamine 7''-transferase (eptB) from Escherichia coli (strain K12).